The primary structure comprises 151 residues: Ubiquitin-conjugating enzyme E2 2 (151 aa).

The UBC core domain occupies 4 to 150; it reads AARRRLMRDF…VRETVEKSWE (147 aa). C88 functions as the Glycyl thioester intermediate in the catalytic mechanism.

This sequence belongs to the ubiquitin-conjugating enzyme family.

The protein resides in the cytoplasm. It localises to the nucleus. It carries out the reaction S-ubiquitinyl-[E1 ubiquitin-activating enzyme]-L-cysteine + [E2 ubiquitin-conjugating enzyme]-L-cysteine = [E1 ubiquitin-activating enzyme]-L-cysteine + S-ubiquitinyl-[E2 ubiquitin-conjugating enzyme]-L-cysteine.. It participates in protein modification; protein ubiquitination. Catalyzes the covalent attachment of ubiquitin to other proteins. Plays a role in transcription regulation by catalyzing the monoubiquitination of histone H2B to form H2BK123ub1. H2BK123ub1 gives a specific tag for epigenetic transcriptional activation and is also a prerequisite for H3K4me and H3K79me formation. Also involved in postreplication repair of UV-damaged DNA, in N-end rule-dependent protein degradation and in sporulation. In Fusarium solani (Filamentous fungus), this protein is Ubiquitin-conjugating enzyme E2 2 (UBC2).